Here is a 265-residue protein sequence, read N- to C-terminus: tRNA pseudouridine synthase A (265 aa).

D58 serves as the catalytic Nucleophile. Y116 provides a ligand contact to substrate.

Belongs to the tRNA pseudouridine synthase TruA family. As to quaternary structure, homodimer.

The catalysed reaction is uridine(38/39/40) in tRNA = pseudouridine(38/39/40) in tRNA. Functionally, formation of pseudouridine at positions 38, 39 and 40 in the anticodon stem and loop of transfer RNAs. The sequence is that of tRNA pseudouridine synthase A from Neisseria meningitidis serogroup B (strain ATCC BAA-335 / MC58).